The following is a 132-amino-acid chain: MLLLSSPFVSVSPPPPPLSSHGARPALRIEAARQLTGRVVTTKADKTVGVEVVRLAPHPKYKRRERIKKKYQAHDPDNQFKVGDVVELQPSRPISKTKHFLAIPLPPRDTRRKSQLLPPLQSDDDQEPSSRE.

The span at M1–V11 shows a compositional bias: low complexity. 2 disordered regions span residues M1 to A23 and P104 to E132. Residues M1 to A31 constitute a chloroplast transit peptide. Over residues S122 to E132 the composition is skewed to acidic residues.

The protein belongs to the universal ribosomal protein uS17 family. Part of the 30S ribosomal subunit.

It localises to the plastid. It is found in the chloroplast. Functionally, one of the primary rRNA binding proteins, it binds specifically to the 5'-end of 16S ribosomal RNA. Its function is as follows. In the hcf60 mutation the Activator tag is inserted 17 base pars upstream of the initiation codon. This mutation is seedling lethal, due to plastid ribosome insufficiency. However under non-light stressed conditions photosynthesis and oxygen evolution can occur. In Zea mays (Maize), this protein is Small ribosomal subunit protein uS17c (RPS17).